The following is a 231-amino-acid chain: Proteasome subunit alpha type-2 (231 aa).

The protein belongs to the peptidase T1A family. The 26S proteasome consists of a 20S proteasome core and two 19S regulatory subunits. The 20S proteasome core is composed of 28 subunits that are arranged in four stacked rings, resulting in a barrel-shaped structure. The two end rings are each formed by seven alpha subunits, and the two central rings are each formed by seven beta subunits. The catalytic chamber with the active sites is on the inside of the barrel.

Its subcellular location is the cytoplasm. It is found in the nucleus. Its function is as follows. The proteasome is a multicatalytic proteinase complex which is characterized by its ability to cleave peptides with Arg, Phe, Tyr, Leu, and Glu adjacent to the leaving group at neutral or slightly basic pH. The proteasome has an ATP-dependent proteolytic activity. The polypeptide is Proteasome subunit alpha type-2 (pas-2) (Caenorhabditis elegans).